Here is a 440-residue protein sequence, read N- to C-terminus: Chromosomal replication initiator protein DnaA (440 aa).

A domain I, interacts with DnaA modulators region spans residues 1 to 69 (MKERILQEIK…VKVVLGNDAT (69 aa)). Residues 69–96 (TFEITYEAFEPHSSYSEPLVKKRAVLLT) are domain II. Positions 97–313 (PLNPDYTFEN…GAIIKLLVYK (217 aa)) are domain III, AAA+ region. Val-108, Asn-113, Gly-140, Leu-141, Gly-142, Lys-143, Thr-144, His-145, and Arg-300 together coordinate ADP. Gly-140 serves as a coordination point for ATP. ATP contacts are provided by Gly-142, Lys-143, and Thr-144. Thr-144 is a binding site for Mg(2+). Residues 314–440 (ETTGKEVDLK…GEISRRALSG (127 aa)) form a domain IV, binds dsDNA region.

The protein belongs to the DnaA family. Oligomerizes as a right-handed, spiral filament on DNA at oriC.

It localises to the cytoplasm. Functionally, plays an essential role in the initiation and regulation of chromosomal replication. ATP-DnaA binds to the origin of replication (oriC) to initiate formation of the DNA replication initiation complex once per cell cycle. Binds the DnaA box (a 9 base pair repeat at the origin) and separates the double-stranded (ds)DNA. Forms a right-handed helical filament on oriC DNA; dsDNA binds to the exterior of the filament while single-stranded (ss)DNA is stabiized in the filament's interior. The ATP-DnaA-oriC complex binds and stabilizes one strand of the AT-rich DNA unwinding element (DUE), permitting loading of DNA polymerase. After initiation quickly degrades to an ADP-DnaA complex that is not apt for DNA replication. Binds acidic phospholipids. The DnaA box consensus is 5'-[ATC][AT]AC[CT]TACCA[CT][CTA]-3' in this bacterium. Mutagenesis of residues that line the central pore blocks dsDNA separation. This chain is Chromosomal replication initiator protein DnaA, found in Thermotoga maritima (strain ATCC 43589 / DSM 3109 / JCM 10099 / NBRC 100826 / MSB8).